Reading from the N-terminus, the 621-residue chain is 1-deoxy-D-xylulose-5-phosphate synthase (621 aa).

Thiamine diphosphate is bound by residues histidine 76 and 117-119 (AHS). A Mg(2+)-binding site is contributed by aspartate 148. Thiamine diphosphate contacts are provided by residues 149–150 (GA), asparagine 178, tyrosine 285, and glutamate 367. Asparagine 178 contacts Mg(2+).

It belongs to the transketolase family. DXPS subfamily. As to quaternary structure, homodimer. Mg(2+) serves as cofactor. Requires thiamine diphosphate as cofactor.

The catalysed reaction is D-glyceraldehyde 3-phosphate + pyruvate + H(+) = 1-deoxy-D-xylulose 5-phosphate + CO2. The protein operates within metabolic intermediate biosynthesis; 1-deoxy-D-xylulose 5-phosphate biosynthesis; 1-deoxy-D-xylulose 5-phosphate from D-glyceraldehyde 3-phosphate and pyruvate: step 1/1. Functionally, catalyzes the acyloin condensation reaction between C atoms 2 and 3 of pyruvate and glyceraldehyde 3-phosphate to yield 1-deoxy-D-xylulose-5-phosphate (DXP). This Aromatoleum aromaticum (strain DSM 19018 / LMG 30748 / EbN1) (Azoarcus sp. (strain EbN1)) protein is 1-deoxy-D-xylulose-5-phosphate synthase.